Here is a 230-residue protein sequence, read N- to C-terminus: Large ribosomal subunit protein uL4 (230 aa).

The disordered stretch occupies residues 59–113 (RQGTHATKTRGEVSGGGKKPYRQKGTGRARQGSTRAPQFTGGGTVHGPQPRDYSQ).

This sequence belongs to the universal ribosomal protein uL4 family. In terms of assembly, part of the 50S ribosomal subunit.

In terms of biological role, one of the primary rRNA binding proteins, this protein initially binds near the 5'-end of the 23S rRNA. It is important during the early stages of 50S assembly. It makes multiple contacts with different domains of the 23S rRNA in the assembled 50S subunit and ribosome. Functionally, forms part of the polypeptide exit tunnel. The polypeptide is Large ribosomal subunit protein uL4 (Nocardia farcinica (strain IFM 10152)).